The chain runs to 66 residues: MKAADVRAKSLDQLNDELGTLKKEQFNLRFQKATGQLEKTARVKQVRRDIARIKTIARQKAAESKA.

It belongs to the universal ribosomal protein uL29 family.

This chain is Large ribosomal subunit protein uL29, found in Brucella abortus (strain S19).